Here is a 344-residue protein sequence, read N- to C-terminus: Glutamine synthetase (344 aa).

The region spanning 4–86 (YKLEYIWLDG…VMCEVMMPDG (83 aa)) is the GS beta-grasp domain. The region spanning 89-344 (PHASNKRATI…SVPTEKKAVA (256 aa)) is the GS catalytic domain. The Mg(2+) site is built by E109 and E111. E167 is a binding site for ATP. E172 and E179 together coordinate Mg(2+). L-glutamate is bound at residue E278.

Belongs to the glutamine synthetase family. Homooctamer and homotetramer. It depends on Mg(2+) as a cofactor.

Its subcellular location is the cytoplasm. The enzyme catalyses L-glutamate + NH4(+) + ATP = L-glutamine + ADP + phosphate + H(+). In terms of biological role, catalyzes the ATP-dependent biosynthesis of glutamine from glutamate and ammonia. This is Glutamine synthetase from Bradyrhizobium diazoefficiens (strain JCM 10833 / BCRC 13528 / IAM 13628 / NBRC 14792 / USDA 110).